Consider the following 301-residue polypeptide: ATP synthase subunit gamma, mitochondrial (301 aa).

It belongs to the ATPase gamma chain family. F-type ATPases have 2 components, CF(1) - the catalytic core - and CF(0) - the membrane proton channel. CF(1) has five subunits: alpha(3), beta(3), gamma(1), delta(1), epsilon(1). CF(0) has three main subunits: a, b and c.

Its subcellular location is the mitochondrion. The protein resides in the mitochondrion inner membrane. In terms of biological role, mitochondrial membrane ATP synthase (F(1)F(0) ATP synthase or Complex V) produces ATP from ADP in the presence of a proton gradient across the membrane which is generated by electron transport complexes of the respiratory chain. F-type ATPases consist of two structural domains, F(1) - containing the extramembraneous catalytic core, and F(0) - containing the membrane proton channel, linked together by a central stalk and a peripheral stalk. During catalysis, ATP synthesis in the catalytic domain of F(1) is coupled via a rotary mechanism of the central stalk subunits to proton translocation. Part of the complex F(1) domain and the central stalk which is part of the complex rotary element. The gamma subunit protrudes into the catalytic domain formed of alpha(3)beta(3). Rotation of the central stalk against the surrounding alpha(3)beta(3) subunits leads to hydrolysis of ATP in three separate catalytic sites on the beta subunits. This chain is ATP synthase subunit gamma, mitochondrial (atp3), found in Schizosaccharomyces pombe (strain 972 / ATCC 24843) (Fission yeast).